The chain runs to 326 residues: Serine protease 38 (326 aa).

An N-terminal signal peptide occupies residues 1 to 32 (MAAPASVMGPLGPSALGLLLLLLVVAPPRVAA). Residues 33–59 (LVHRQPENQGISLTGSVACGRPSMEGK) constitute a propeptide, activation peptide. The Peptidase S1 domain maps to 60–293 (ILGGVPAPER…FSKWICDNIE (234 aa)). The cysteines at positions 85 and 101 are disulfide-linked. The active-site Charge relay system is the histidine 100. N-linked (GlcNAc...) asparagine glycosylation is present at asparagine 125. Aspartate 150 serves as the catalytic Charge relay system. 3 cysteine pairs are disulfide-bonded: cysteine 183-cysteine 251, cysteine 214-cysteine 230, and cysteine 241-cysteine 269. The Charge relay system role is filled by serine 245.

Belongs to the peptidase S1 family.

Its subcellular location is the secreted. This chain is Serine protease 38 (PRSS38), found in Homo sapiens (Human).